Reading from the N-terminus, the 488-residue chain is Solanidine UDP-glucose glucosyltransferase 1 (488 aa).

His23 (proton acceptor) is an active-site residue. An anthocyanidin is bound at residue His23. The active-site Charge relay is Asp127. Positions 352, 354, 369, 373, 374, and 377 each coordinate UDP-alpha-D-glucose. Ala392 serves as a coordination point for an anthocyanidin. UDP-alpha-D-glucose contacts are provided by Asp393 and Gln394.

This sequence belongs to the UDP-glycosyltransferase family. As to expression, expressed in the shoot apical meristem (SAM) and tuber.

The enzyme catalyses solasodine + UDP-alpha-D-glucose = solasodine 3-beta-D-glucoside + UDP + H(+). The catalysed reaction is solanidine + UDP-alpha-D-glucose = solanidine 3-O-beta-D-glucopyranoside + UDP + H(+). It carries out the reaction tomatidine + UDP-alpha-D-glucose = tomatidine 3-O-beta-D-glucopyranoside + UDP + H(+). In terms of biological role, glucosyltransferase involved in the glucosylation of the steroidal alkaloid aglycons solanidine, solasodine and tomatidine to produce their corresponding glycoalkaloids. This is Solanidine UDP-glucose glucosyltransferase 1 from Solanum tuberosum (Potato).